The primary structure comprises 754 residues: Subtilisin-like protease SBT3.12 (754 aa).

The N-terminal stretch at 1 to 28 is a signal peptide; the sequence is MGIVKGRSRAGLFIGFLFIVNVGFCVFA. The propeptide at 29–117 is activation peptide; sequence QESSNEERKI…VAPNRKVELQ (89 aa). An Inhibitor I9 domain is found at 39-116; the sequence is YVVHLGVRRH…SVAPNRKVEL (78 aa). The Peptidase S8 domain maps to 121-606; sequence IYDYLGLSPS…AGLVNAERAK (486 aa). The Charge relay system role is filled by aspartate 151. An N-linked (GlcNAc...) asparagine glycan is attached at asparagine 206. Histidine 224 serves as the catalytic Charge relay system. N-linked (GlcNAc...) asparagine glycans are attached at residues asparagine 239 and asparagine 369. Serine 537 (charge relay system) is an active-site residue. 2 N-linked (GlcNAc...) asparagine glycosylation sites follow: asparagine 629 and asparagine 740.

It belongs to the peptidase S8 family.

It is found in the secreted. This chain is Subtilisin-like protease SBT3.12, found in Arabidopsis thaliana (Mouse-ear cress).